Reading from the N-terminus, the 21-residue chain is Putative pancreatic polypeptide 2 (21 aa).

The protein belongs to the NPY family.

The chain is Putative pancreatic polypeptide 2 (PPY2P) from Homo sapiens (Human).